The sequence spans 275 residues: NADPH-dependent 7-cyano-7-deazaguanine reductase (275 aa).

Substrate is bound at residue isoleucine 81–serine 83. Serine 83–lysine 84 is a binding site for NADPH. Catalysis depends on cysteine 181, which acts as the Thioimide intermediate. Residue aspartate 188 is the Proton donor of the active site. Histidine 220 to glutamate 221 is a substrate binding site. An NADPH-binding site is contributed by arginine 249–glycine 250.

This sequence belongs to the GTP cyclohydrolase I family. QueF type 2 subfamily. In terms of assembly, homodimer.

The protein resides in the cytoplasm. The catalysed reaction is 7-aminomethyl-7-carbaguanine + 2 NADP(+) = 7-cyano-7-deazaguanine + 2 NADPH + 3 H(+). The protein operates within tRNA modification; tRNA-queuosine biosynthesis. Catalyzes the NADPH-dependent reduction of 7-cyano-7-deazaguanine (preQ0) to 7-aminomethyl-7-deazaguanine (preQ1). This chain is NADPH-dependent 7-cyano-7-deazaguanine reductase, found in Xylella fastidiosa (strain M23).